The following is a 372-amino-acid chain: Carbamoyl phosphate synthase small chain (372 aa).

Positions 1-179 are CPSase; it reads MRAILALEDG…ALVTGKTLPP (179 aa). L-glutamine-binding residues include S45, G231, and G233. One can recognise a Glutamine amidotransferase type-1 domain in the interval 183-369; that stretch reads DIVAFDFGIK…RKMIAASKRQ (187 aa). C258 (nucleophile) is an active-site residue. L-glutamine-binding residues include L259, Q262, N300, G302, and F303. Residues H342 and E344 contribute to the active site.

The protein belongs to the CarA family. Composed of two chains; the small (or glutamine) chain promotes the hydrolysis of glutamine to ammonia, which is used by the large (or ammonia) chain to synthesize carbamoyl phosphate. Tetramer of heterodimers (alpha,beta)4.

The catalysed reaction is hydrogencarbonate + L-glutamine + 2 ATP + H2O = carbamoyl phosphate + L-glutamate + 2 ADP + phosphate + 2 H(+). It carries out the reaction L-glutamine + H2O = L-glutamate + NH4(+). Its pathway is amino-acid biosynthesis; L-arginine biosynthesis; carbamoyl phosphate from bicarbonate: step 1/1. It functions in the pathway pyrimidine metabolism; UMP biosynthesis via de novo pathway; (S)-dihydroorotate from bicarbonate: step 1/3. Its function is as follows. Small subunit of the glutamine-dependent carbamoyl phosphate synthetase (CPSase). CPSase catalyzes the formation of carbamoyl phosphate from the ammonia moiety of glutamine, carbonate, and phosphate donated by ATP, constituting the first step of 2 biosynthetic pathways, one leading to arginine and/or urea and the other to pyrimidine nucleotides. The small subunit (glutamine amidotransferase) binds and cleaves glutamine to supply the large subunit with the substrate ammonia. This chain is Carbamoyl phosphate synthase small chain, found in Akkermansia muciniphila (strain ATCC BAA-835 / DSM 22959 / JCM 33894 / BCRC 81048 / CCUG 64013 / CIP 107961 / Muc).